We begin with the raw amino-acid sequence, 423 residues long: Serine--tRNA ligase (423 aa).

230-232 (TAE) contributes to the L-serine binding site. 261 to 263 (RAE) provides a ligand contact to ATP. Position 284 (Glu284) interacts with L-serine. 348–351 (EISS) contributes to the ATP binding site. Residue Ser384 coordinates L-serine.

The protein belongs to the class-II aminoacyl-tRNA synthetase family. Type-1 seryl-tRNA synthetase subfamily. In terms of assembly, homodimer. The tRNA molecule binds across the dimer.

It is found in the cytoplasm. It carries out the reaction tRNA(Ser) + L-serine + ATP = L-seryl-tRNA(Ser) + AMP + diphosphate + H(+). The enzyme catalyses tRNA(Sec) + L-serine + ATP = L-seryl-tRNA(Sec) + AMP + diphosphate + H(+). It functions in the pathway aminoacyl-tRNA biosynthesis; selenocysteinyl-tRNA(Sec) biosynthesis; L-seryl-tRNA(Sec) from L-serine and tRNA(Sec): step 1/1. In terms of biological role, catalyzes the attachment of serine to tRNA(Ser). Is also able to aminoacylate tRNA(Sec) with serine, to form the misacylated tRNA L-seryl-tRNA(Sec), which will be further converted into selenocysteinyl-tRNA(Sec). The protein is Serine--tRNA ligase of Acetivibrio thermocellus (strain ATCC 27405 / DSM 1237 / JCM 9322 / NBRC 103400 / NCIMB 10682 / NRRL B-4536 / VPI 7372) (Clostridium thermocellum).